Reading from the N-terminus, the 123-residue chain is Small ribosomal subunit protein uS12 (123 aa).

Position 89 is a 3-methylthioaspartic acid (D89).

Belongs to the universal ribosomal protein uS12 family. Part of the 30S ribosomal subunit. Contacts proteins S8 and S17. May interact with IF1 in the 30S initiation complex.

With S4 and S5 plays an important role in translational accuracy. Functionally, interacts with and stabilizes bases of the 16S rRNA that are involved in tRNA selection in the A site and with the mRNA backbone. Located at the interface of the 30S and 50S subunits, it traverses the body of the 30S subunit contacting proteins on the other side and probably holding the rRNA structure together. The combined cluster of proteins S8, S12 and S17 appears to hold together the shoulder and platform of the 30S subunit. The sequence is that of Small ribosomal subunit protein uS12 from Maridesulfovibrio salexigens (strain ATCC 14822 / DSM 2638 / NCIMB 8403 / VKM B-1763) (Desulfovibrio salexigens).